Reading from the N-terminus, the 331-residue chain is Pantothenate kinase (331 aa).

ATP is bound at residue 109–116 (GSVAVGKS).

Belongs to the prokaryotic pantothenate kinase family.

The protein resides in the cytoplasm. The catalysed reaction is (R)-pantothenate + ATP = (R)-4'-phosphopantothenate + ADP + H(+). It participates in cofactor biosynthesis; coenzyme A biosynthesis; CoA from (R)-pantothenate: step 1/5. The sequence is that of Pantothenate kinase from Rhizobium leguminosarum bv. trifolii (strain WSM2304).